The primary structure comprises 121 residues: Small ribosomal subunit protein bS16m (121 aa).

This sequence belongs to the bacterial ribosomal protein bS16 family. As to quaternary structure, component of the mitochondrial small ribosomal subunit (mt-SSU). Mature yeast 74S mitochondrial ribosomes consist of a small (37S) and a large (54S) subunit. The 37S small subunit contains a 15S ribosomal RNA (15S mt-rRNA) and 34 different proteins. The 54S large subunit contains a 21S rRNA (21S mt-rRNA) and 46 different proteins.

It is found in the mitochondrion. In terms of biological role, component of the mitochondrial ribosome (mitoribosome), a dedicated translation machinery responsible for the synthesis of mitochondrial genome-encoded proteins, including at least some of the essential transmembrane subunits of the mitochondrial respiratory chain. The mitoribosomes are attached to the mitochondrial inner membrane and translation products are cotranslationally integrated into the membrane. The polypeptide is Small ribosomal subunit protein bS16m (MRPS16) (Saccharomyces cerevisiae (strain ATCC 204508 / S288c) (Baker's yeast)).